We begin with the raw amino-acid sequence, 231 residues long: Octanoyltransferase (231 aa).

In terms of domain architecture, BPL/LPL catalytic spans 29–231 (PQDPDLLWLC…GRQLCIWLAP (203 aa)). Substrate-binding positions include 68–75 (RGGQVTFH), 164–166 (ALG), and 177–179 (GVA). The Acyl-thioester intermediate role is filled by Cys-195.

This sequence belongs to the LipB family.

The protein localises to the cytoplasm. The enzyme catalyses octanoyl-[ACP] + L-lysyl-[protein] = N(6)-octanoyl-L-lysyl-[protein] + holo-[ACP] + H(+). Its pathway is protein modification; protein lipoylation via endogenous pathway; protein N(6)-(lipoyl)lysine from octanoyl-[acyl-carrier-protein]: step 1/2. In terms of biological role, catalyzes the transfer of endogenously produced octanoic acid from octanoyl-acyl-carrier-protein onto the lipoyl domains of lipoate-dependent enzymes. Lipoyl-ACP can also act as a substrate although octanoyl-ACP is likely to be the physiological substrate. The sequence is that of Octanoyltransferase from Verminephrobacter eiseniae (strain EF01-2).